A 62-amino-acid chain; its full sequence is U-myrmeciitoxin(01)-Mg3a (62 aa).

A signal peptide spans 1-24; sequence MKTTVILLLAIAIIFAIMTTLTSA.

Expressed by the venom gland.

The protein resides in the secreted. In terms of biological role, may have antimicrobial properties, like most ant linear peptides. This Myrmecia gulosa (Red bulldog ant) protein is U-myrmeciitoxin(01)-Mg3a.